A 398-amino-acid polypeptide reads, in one-letter code: Argininosuccinate synthase (398 aa).

Position 8–16 (8–16 (AYSGGLDTS)) interacts with ATP. Tyrosine 87 is a binding site for L-citrulline. Glycine 117 contacts ATP. Residues threonine 119, asparagine 123, and aspartate 124 each coordinate L-aspartate. L-citrulline is bound at residue asparagine 123. Positions 127, 175, 260, and 272 each coordinate L-citrulline.

The protein belongs to the argininosuccinate synthase family. Type 1 subfamily. Homotetramer.

Its subcellular location is the cytoplasm. It carries out the reaction L-citrulline + L-aspartate + ATP = 2-(N(omega)-L-arginino)succinate + AMP + diphosphate + H(+). Its pathway is amino-acid biosynthesis; L-arginine biosynthesis; L-arginine from L-ornithine and carbamoyl phosphate: step 2/3. The chain is Argininosuccinate synthase from Mycobacterium avium (strain 104).